The following is a 672-amino-acid chain: Leucine-rich repeat receptor-like protein kinase PXC1 (672 aa).

The signal sequence occupies residues 1 to 21; it reads MAAKPLLLPLLLLLHLSITLA. The Extracellular segment spans residues 22–269; that stretch reads QNDTNALTLF…IHSHRGIKPG (248 aa). Asn23, Asn44, and Asn101 each carry an N-linked (GlcNAc...) asparagine glycan. The LRR 1 repeat unit spans residues 87 to 110; it reads LDQLRLLDLHDNRLNGTVSPLTNC. Residue Lys111 forms a Glycyl lysine isopeptide (Lys-Gly) (interchain with G-Cter in ubiquitin) linkage. LRR repeat units follow at residues 112 to 134, 135 to 158, 160 to 181, and 182 to 205; these read NLRL…ISFL, KRMI…ILGF, RVLT…FSQM, and KSLL…VVKK. 2 N-linked (GlcNAc...) asparagine glycosylation sites follow: Asn188 and Asn197. The segment covering 233–249 has biased composition (polar residues); the sequence is ESSNTDQIVPSNPTSIP. Residues 233 to 254 are disordered; the sequence is ESSNTDQIVPSNPTSIPHSPVS. The helical transmembrane segment at 270–290 threads the bilayer; the sequence is IIAAVIGGCVAVIVLVSFGFA. Residues 291–672 are Cytoplasmic-facing; the sequence is FCCGRLDRNG…MSPSLATTDG (382 aa). The interval 300–333 is disordered; sequence GERSKSGSVETGFVGGGEGKRRSSYGEGGESDAT. The 289-residue stretch at 357 to 645 folds into the Protein kinase domain; sequence KASAEMLGKG…AEVVKMVEEI (289 aa). Residues 363 to 371 and Lys386 each bind ATP; that span reads LGKGSLGTV. The disordered stretch occupies residues 650–672; the sequence is SPVGEDFDESRNSMSPSLATTDG. A compositionally biased stretch (polar residues) spans 661-672; it reads NSMSPSLATTDG.

Belongs to the protein kinase superfamily. Ser/Thr protein kinase family. In terms of tissue distribution, expressed in the vascular strands of cotyledons, the shoot apex, hypocotyls, roots, leaves, stems and flowers.

It is found in the cell membrane. Functionally, leucine-rich repeat receptor-like protein kinase involved in secondary cell wall formation in xylem fibers. May play a role in a regulatory network which also incorporates the TDR/PXY signaling pathway and regulates the maturation of interfascicular fiber cells. May promote the initiation of secondary cell wall deposition during the procedure of cell expansion. The chain is Leucine-rich repeat receptor-like protein kinase PXC1 from Arabidopsis thaliana (Mouse-ear cress).